Reading from the N-terminus, the 132-residue chain is Chemokine-like protein TAFA-5 (132 aa).

A signal peptide spans 1 to 43 (MAPSPRTGSRQDATALPSMSSTFWAFMILASLLIAYCSQLAAG). Residue Asn-113 is glycosylated (N-linked (GlcNAc...) asparagine).

The protein belongs to the TAFA family.

The protein localises to the secreted. Acts as a chemokine-like protein by regulating cell proliferation and migration through activation of G protein-coupled receptors (GPCRs), such as S1PR2 and FPR2. Stimulates chemotactic migration of macrophages mediated by the MAPK3/ERK1 and AKT1 pathway. Blocks TNFSF11/RANKL-induced osteoclast formation from macrophages by inhibiting up-regulation of osteoclast fusogenic and differentiation genes. Stimulation of macrophage migration and inhibition of osteoclast formation is mediated through the GPCR FPR2. Acts as an adipokine by negatively regulating vascular smooth muscle cell (VSMC) proliferation and migration in response to platelet-derived growth factor stimulation via GPCR S1PR2 and G protein GNA12/GNA13-transmitted RHOA signaling. Inhibits injury-induced cell proliferation and neointima formation in the femoral arteries. The sequence is that of Chemokine-like protein TAFA-5 (TAFA5) from Bos taurus (Bovine).